Here is a 317-residue protein sequence, read N- to C-terminus: Ribosomal protein L11 methyltransferase (317 aa).

S-adenosyl-L-methionine-binding residues include Thr-158, Gly-179, Asp-201, and Asn-244.

The protein belongs to the methyltransferase superfamily. PrmA family.

It localises to the cytoplasm. It carries out the reaction L-lysyl-[protein] + 3 S-adenosyl-L-methionine = N(6),N(6),N(6)-trimethyl-L-lysyl-[protein] + 3 S-adenosyl-L-homocysteine + 3 H(+). Methylates ribosomal protein L11. The protein is Ribosomal protein L11 methyltransferase of Streptococcus agalactiae serotype Ia (strain ATCC 27591 / A909 / CDC SS700).